The chain runs to 309 residues: Homoserine O-succinyltransferase (309 aa).

Cysteine 142 acts as the Acyl-thioester intermediate in catalysis. Positions 163 and 192 each coordinate substrate. Residue histidine 235 is the Proton acceptor of the active site. Glutamate 237 is an active-site residue. Arginine 249 is a substrate binding site.

This sequence belongs to the MetA family.

It localises to the cytoplasm. The catalysed reaction is L-homoserine + succinyl-CoA = O-succinyl-L-homoserine + CoA. Its pathway is amino-acid biosynthesis; L-methionine biosynthesis via de novo pathway; O-succinyl-L-homoserine from L-homoserine: step 1/1. In terms of biological role, transfers a succinyl group from succinyl-CoA to L-homoserine, forming succinyl-L-homoserine. The protein is Homoserine O-succinyltransferase of Enterobacter sp. (strain 638).